Consider the following 171-residue polypeptide: ATP synthase subunit b (171 aa).

A helical transmembrane segment spans residues 4–24 (IAFFVICVGFPSLIFASASIQ).

Belongs to the ATPase B chain family. F-type ATPases have 2 components, F(1) - the catalytic core - and F(0) - the membrane proton channel. F(1) has five subunits: alpha(3), beta(3), gamma(1), delta(1), epsilon(1). F(0) has three main subunits: a(1), b(2) and c(10-14). The alpha and beta chains form an alternating ring which encloses part of the gamma chain. F(1) is attached to F(0) by a central stalk formed by the gamma and epsilon chains, while a peripheral stalk is formed by the delta and b chains.

It is found in the cell inner membrane. F(1)F(0) ATP synthase produces ATP from ADP in the presence of a proton or sodium gradient. F-type ATPases consist of two structural domains, F(1) containing the extramembraneous catalytic core and F(0) containing the membrane proton channel, linked together by a central stalk and a peripheral stalk. During catalysis, ATP synthesis in the catalytic domain of F(1) is coupled via a rotary mechanism of the central stalk subunits to proton translocation. Functionally, component of the F(0) channel, it forms part of the peripheral stalk, linking F(1) to F(0). This chain is ATP synthase subunit b, found in Helicobacter hepaticus (strain ATCC 51449 / 3B1).